The sequence spans 319 residues: Ribonucleoside-diphosphate reductase small chain (319 aa).

Residues aspartate 70, glutamate 101, and histidine 104 each contribute to the Fe cation site. Residue tyrosine 108 is part of the active site. Residues glutamate 163, glutamate 197, and histidine 200 each coordinate Fe cation. The interaction with R1 stretch occupies residues 313 to 319 (FSLDVDF).

Belongs to the ribonucleoside diphosphate reductase small chain family. Interacts with RNR1/OPG080 subunit. Can interact with host RNR1 supunit. The cofactor is Fe cation.

The enzyme catalyses a 2'-deoxyribonucleoside 5'-diphosphate + [thioredoxin]-disulfide + H2O = a ribonucleoside 5'-diphosphate + [thioredoxin]-dithiol. In terms of biological role, ribonucleoside-diphosphate reductase holoenzyme provides the precursors necessary for viral DNA synthesis. Allows virus growth in non-dividing cells. Catalyzes the biosynthesis of deoxyribonucleotides from the corresponding ribonucleotides. In Vaccinia virus (strain Copenhagen) (VACV), this protein is Ribonucleoside-diphosphate reductase small chain (OPG048).